The primary structure comprises 97 residues: HssA/B-like protein 32 (97 aa).

Disordered regions lie at residues 1 to 23 (MTLF…SLAS) and 62 to 97 (AKSS…GSCS). Residues 62-74 (AKSSGGSCGGKGG) show a composition bias toward gly residues. The span at 75 to 88 (SHNHGHGHGPHGHG) shows a compositional bias: basic residues.

Belongs to the hssA/B family.

The polypeptide is HssA/B-like protein 32 (hssl32) (Dictyostelium discoideum (Social amoeba)).